Reading from the N-terminus, the 347-residue chain is Heat-inducible transcription repressor HrcA (347 aa).

The protein belongs to the HrcA family.

Functionally, negative regulator of class I heat shock genes (grpE-dnaK-dnaJ and groELS operons). Prevents heat-shock induction of these operons. The chain is Heat-inducible transcription repressor HrcA from Lactococcus lactis subsp. cremoris (strain SK11).